The sequence spans 305 residues: NK1 transcription factor-related protein 2 (305 aa).

2 disordered regions span residues 51-158 (EEVE…KPRR) and 210-257 (KWKK…PGAL). The span at 87 to 96 (SEAEEEEEAE) shows a compositional bias: acidic residues. Over residues 97–115 (DAGRAHQPERWQGVHEGSP) the composition is skewed to basic and acidic residues. A compositionally biased stretch (low complexity) spans 129–140 (AEGLPASPGSPG). The homeobox DNA-binding region spans 156–215 (PRRARTAFTYEQLVALENKFRATRYLSVCERLNLALSLSLTETQVKIWFQNRRTKWKKQN).

The protein belongs to the NK-1 homeobox family. In terms of assembly, interacts (via the homeodomain) with HIPK1, HIPK2, and HIPK3. In terms of processing, phosphorylated by HIPK2 in vitro. In terms of tissue distribution, expression detected in the brain, testis and spleen. In the testis, expressed in the germ cells of the seminiferous epithelium, predominantly in elongating spermatids and spermatozoa. Expressed throughout the brain with highest levels in regions of the cerebral cortex, hippocampus, diencephalon, pons, medulla and cerebellum.

It is found in the nucleus. It localises to the nucleolus. Its function is as follows. Transcriptional repressor. May play a role in early development as a Wnt/beta-catenin effector, hence controlling pluripotency and preimplantation development of embryonic stem cells. May promote adipogenesis in mesenchymal stem cells, possibly by inhibiting the expression of the antiadipogenic factor NR2F2. May inhibit osteoblastogenic differentiation. The chain is NK1 transcription factor-related protein 2 (Nkx1-2) from Mus musculus (Mouse).